Consider the following 136-residue polypeptide: Phospholipase A2 (136 aa).

Ca(2+) contacts are provided by Trp8, Gly10, and Gly12. Intrachain disulfides connect Cys9–Cys31, Cys30–Cys70, Cys37–Cys63, Cys61–Cys95, and Cys105–Cys115. Asn16 is a glycosylation site (N-linked (GlcNAc...) asparagine). His34 is an active-site residue. Asp35 is a binding site for Ca(2+). The active site involves Asp64.

The protein belongs to the phospholipase A2 family. Ca(2+) is required as a cofactor. As to expression, expressed by the venom gland.

The protein localises to the secreted. The enzyme catalyses a 1,2-diacyl-sn-glycero-3-phosphocholine + H2O = a 1-acyl-sn-glycero-3-phosphocholine + a fatty acid + H(+). Its function is as follows. PLA2 catalyzes the calcium-dependent hydrolysis of the 2-acyl groups in 3-sn-phosphoglycerides. The sequence is that of Phospholipase A2 from Bombus pensylvanicus (American bumblebee).